The following is a 197-amino-acid chain: Ribosome maturation factor RimM (197 aa).

Positions 92-164 (DEGWYEHELV…YILVTPPPGL (73 aa)) constitute a PRC barrel domain. Residues 167–197 (INVEDSGETSDAGESGPGEAEPGKAEAGDNA) form a disordered region. Residues 176-186 (SDAGESGPGEA) are compositionally biased toward low complexity. Positions 187-197 (EPGKAEAGDNA) are enriched in basic and acidic residues.

The protein belongs to the RimM family. As to quaternary structure, binds ribosomal protein uS19.

It is found in the cytoplasm. In terms of biological role, an accessory protein needed during the final step in the assembly of 30S ribosomal subunit, possibly for assembly of the head region. Essential for efficient processing of 16S rRNA. May be needed both before and after RbfA during the maturation of 16S rRNA. It has affinity for free ribosomal 30S subunits but not for 70S ribosomes. The chain is Ribosome maturation factor RimM from Arthrobacter sp. (strain FB24).